The following is a 623-amino-acid chain: MKKIPHELTHMAFHGLVKYSDITVEGYPKIQYHGFIGNNRTAMLVAMNGYIDWGCLPNFNSNAVFSSILDKNKGGYFAIFPSDTTDVYVDQYYKEMTNVLVTEFVKNGKIILRLTDFMPDSEYGKISFPEVHRFVESFSEPIDITIDFKPTFNYGQDKPIIEKDQHGFIFTTDKESIGISSEFPLRKNSDRIFGNVKMEPRSSSWIIALYGIHHLFRTTDYKSYLRLQETTDYWRKWASSSSYAGAYHSMVMRSALALKVLFYEPTGLMVAAPTASLPEAIGGERNWDYRFTWIRDTAYVIEALSSIGYKYEATEFLYDMMDMITRDNRIRTIYSIDDSNDLEERIIDYEGYRGSRPVRIGNKAVDQLQIDQYGSIVRAIHSMAKAGGIVNSYLWDFVEQVMAKIEYLWKYPDSSIWEFRTEPKQYVYSKVMSWAAFDSAISMAKDLGLSAPIKQWKSIQDEIKKEVLEKGFDTDTNSFVQYYGSKNIDAALLRLPILGFIPANDEKFLGTLSRIEKELMVDGYLFKRYREDDGLKGDEGSFLMLTFWYIEDLILMKRLKKAREVLESVLEKANHLGLYSEEIDEKSGDFLGNFPQALSHLGVIRVAPKLEEALLKRTSKINS.

The protein belongs to the glycosyl hydrolase 15 family. In terms of assembly, monomer.

The enzyme catalyses alpha,alpha-trehalose + H2O = alpha-D-glucose + beta-D-glucose. It participates in glycan degradation; trehalose degradation; D-glucose from alpha,alpha-trehalose: step 1/1. Inhibited by validamycin A. In terms of biological role, catalyzes the hydrolysis of alpha,alpha-trehalose into two molecules of D-glucose. The polypeptide is Trehalase (Thermoplasma volcanium (strain ATCC 51530 / DSM 4299 / JCM 9571 / NBRC 15438 / GSS1)).